A 911-amino-acid chain; its full sequence is General transcription factor 3C polypeptide 2 (911 aa).

Disordered stretches follow at residues 34–187 (LDVK…RRRA) and 205–297 (ALPA…MAPN). Residues 35–46 (DVKTSSEMTSAE) are compositionally biased toward polar residues. The residue at position 63 (S63) is a Phosphoserine. Over residues 64 to 81 (PDQRRLPPEQESLSRLEQ) the composition is skewed to basic and acidic residues. The span at 92–112 (SKPRASKPGRKRGGRTRKGPK) shows a compositional bias: basic residues. Over residues 114–123 (PQQPNPPSAP) the composition is skewed to pro residues. Residues S132, S165, S167, S220, and S260 each carry the phosphoserine modification. Residues 253-262 (EAEDVEESEG) are compositionally biased toward acidic residues. Positions 263-275 (PSESSSEPEPAVP) are enriched in low complexity. WD repeat units follow at residues 465–521 (CDNG…ALLA) and 552–593 (SECG…PLQR). S597 bears the Phosphoserine mark. The stretch at 611–651 (AHDQAVRTLQWCKANSHFLASAGSDRKIKFWDLRRPYEPIN) is one WD 3 repeat. The segment at 765-785 (SPEGPDHSSASSGVPNPPKAR) is disordered. The stretch at 832–874 (LQLEAIHKVRFSPNLDSYGWLVSGGQSGLVRIHFVRGLASPLG) is one WD 4 repeat. 3 positions are modified to phosphoserine: S871, S892, and S893. The segment at 889–911 (FQPSSPTRRPGFSPTSHRLLPTP) is disordered. The residue at position 895 (T895) is a Phosphothreonine. Phosphoserine is present on S901.

As to quaternary structure, part of the TFIIIC subcomplex TFIIIC2, consisting of six subunits, GTF3C1, GTF3C2, GTF3C3, GTF3C4, GTF3C5 and GTF3C6.

It is found in the nucleus. Its function is as follows. Required for RNA polymerase III-mediated transcription. Component of TFIIIC that initiates transcription complex assembly on tRNA and is required for transcription of 5S rRNA and other stable nuclear and cytoplasmic RNAs. May play a direct role in stabilizing interactions of TFIIIC2 with TFIIIC1. The protein is General transcription factor 3C polypeptide 2 (GTF3C2) of Pongo abelii (Sumatran orangutan).